The following is a 485-amino-acid chain: MALHELTIGQAREKLLSKEISSQDLTKAVLDRIEAVEPQVDAYLTVSKEEAMEAAQKADKALAQGETAPLCGIPLAIKDVMCTKGVLTTCASKILGNFVPPYDATSITKLKEAGAVLVGKTNMDEFAMGSSTENSAFKTTKNPWDLTRTPGGSSGGSAAAVAADMCLGAFGSDTGGSIRQPGSHCSVVGLKPTYGRVSRYGLVAFASSLDQIGPFAKTVEDAAILLQAVAGYDPSDSTSVNVEVPDYTTAIQEDVKGMRVGMPKEYFEMGGLTPDVKNSVDQAIKTLESQGVEVMDVSLPHSKYCVAVYYVIAPAEASSNLARYDGVKYGMREERDSLIDMYHATRSSGFGPEVQRRIIIGTYALSAGYYDAYYGKASQVRTLIMEDYKKAFEKCDAIISPVAPTPAFKLGENTDDPLTMYLSDIFTLSANLAGVCGVSVPCGFSSEGLPIGLQLQGSHFQEEKILRLGHHFQKATDFHTKRPNL.

Catalysis depends on charge relay system residues K78 and S153. Residue S177 is the Acyl-ester intermediate of the active site.

This sequence belongs to the amidase family. GatA subfamily. In terms of assembly, heterotrimer of A, B and C subunits.

It catalyses the reaction L-glutamyl-tRNA(Gln) + L-glutamine + ATP + H2O = L-glutaminyl-tRNA(Gln) + L-glutamate + ADP + phosphate + H(+). Functionally, allows the formation of correctly charged Gln-tRNA(Gln) through the transamidation of misacylated Glu-tRNA(Gln) in organisms which lack glutaminyl-tRNA synthetase. The reaction takes place in the presence of glutamine and ATP through an activated gamma-phospho-Glu-tRNA(Gln). This is Glutamyl-tRNA(Gln) amidotransferase subunit A from Desulfatibacillum aliphaticivorans.